The chain runs to 286 residues: PTS system mannose-specific EIID component (286 aa).

N-formylmethionine is present on Met1. Over 1–17 the chain is Cytoplasmic; that stretch reads MSEMVDTTQTTTEKKLT. The region spanning 14–284 is the PTS EIID domain; the sequence is KKLTQSDIRG…GIAGYACGLL (271 aa). The stretch at 18-55 is an intramembrane region; sequence QSDIRGVFLRSNLFQGSWNFERMQALGFCFSMVPAIRR. At 56–62 the chain is on the cytoplasmic side; that stretch reads LYPENNE. An intramembrane segment occupies 63–95; sequence ARKQAIRRHLEFFNTQPFVAAPILGVTLALEEQ. Over 96 to 103 the chain is Cytoplasmic; the sequence is RANGAEID. A membrane pass occupies residues 104–143; it reads DGAINGIKVGLMGPLAGVGDPIFWGTVRPVFAALGAGIAM. The Periplasmic portion of the chain corresponds to 144–147; it reads SGSL. Positions 148–176 form a transmembrane segment; the sequence is LGPLLFFILFNLVRLATRYYGVAYGYSKG. Residues 177–186 are Cytoplasmic-facing; it reads IDIVKDMGGG. The chain crosses the lipid bilayer at residues 187-212; the sequence is FLQKLTEGASILGLFVMGALVNKWTH. Topologically, residues 213 to 244 are periplasmic; that stretch reads VNIPLVVSRITDQTGKEHVTTVQTILDQLMPG. Positions 245–258 form a transmembrane segment; that stretch reads LVPLLLTFACMWLL. The Cytoplasmic portion of the chain corresponds to 259–264; that stretch reads RKKVNP. The hydrophobic stretch at 265-283 threads the membrane; sequence LWIIVGFFVIGIAGYACGL. Residues 284–286 lie on the Periplasmic side of the membrane; it reads LGL.

In terms of assembly, homotrimer of protomers that are composed of two subunits, IIC and IID.

It is found in the cell inner membrane. In terms of biological role, the phosphoenolpyruvate-dependent sugar phosphotransferase system (sugar PTS), a major carbohydrate active transport system, catalyzes the phosphorylation of incoming sugar substrates concomitantly with their translocation across the cell membrane. The enzyme II ManXYZ PTS system is involved in mannose transport. In Escherichia coli O6:H1 (strain CFT073 / ATCC 700928 / UPEC), this protein is PTS system mannose-specific EIID component (manZ).